A 715-amino-acid polypeptide reads, in one-letter code: Protein sneaky (715 aa).

Topologically, residues 1–32 are cytoplasmic; it reads MLSLLTRPFLPIFCFLYGPQSEGSTRIQCLRR. Residues 33–53 form a helical membrane-spanning segment; the sequence is FVTFLLGLVLGFLLWKLAALN. The Extracellular portion of the chain corresponds to 54-66; the sequence is FTLGRLFVNGATD. A helical membrane pass occupies residues 67 to 87; sequence LYVFIIFVLVTGTIFMLSLPV. At 88–109 the chain is on the cytoplasmic side; that stretch reads RAVILLIFVALVGKSGRTYLRA. The chain crosses the membrane as a helical span at residues 110-130; that stretch reads VAFAFIISGPIANLVENAGEV. Residues 131 to 373 are Extracellular-facing; sequence ARVFVCTTVL…FERQKRIFNK (243 aa). A helical transmembrane segment spans residues 374–394; it reads VMGILQKILCLFMLRMVYVSI. Residues 395-457 are Cytoplasmic-facing; it reads NYYVKYLNDV…FSRTHHESTT (63 aa). The chain crosses the membrane as a helical span at residues 458 to 478; sequence VCFNLLQFLLELVTAGLFILI. At 479 to 553 the chain is on the extracellular side; sequence DHLVVELLQI…NAHVLPKKMY (75 aa). Residues 554–574 traverse the membrane as a helical segment; that stretch reads YQLILLYLIIIVLIYQSTTFL. The Cytoplasmic segment spans residues 575–715; sequence RMRRVICSFF…VEVYTYRKEK (141 aa). An RING-type; degenerate zinc finger spans residues 655–691; that stretch reads CMICRGLEDSTFTVCGNCGLPYCDDCAEDLNSVCFQC.

In terms of tissue distribution, specifically expressed in testis.

It is found in the cytoplasmic vesicle. Its subcellular location is the secretory vesicle. The protein resides in the acrosome membrane. The protein localises to the cytoplasm. It localises to the cytoplasmic vesicle membrane. Functionally, component of the sperm acrosome membrane. Required for breakdown of the sperm plasma membrane after sperm entry into the egg, which is an essential prerequisite for successful fertilization. The protein is Protein sneaky of Drosophila melanogaster (Fruit fly).